Consider the following 595-residue polypeptide: Aspartate--tRNA ligase (595 aa).

Glu176 lines the L-aspartate pocket. Residues 200 to 203 (QIFK) form an aspartate region. Position 222 (Arg222) interacts with L-aspartate. ATP is bound by residues 222–224 (RDE) and Gln231. His450 serves as a coordination point for L-aspartate. Residue Glu484 participates in ATP binding. Arg491 contributes to the L-aspartate binding site. Residue 536 to 539 (GLDR) participates in ATP binding.

The protein belongs to the class-II aminoacyl-tRNA synthetase family. Type 1 subfamily. In terms of assembly, homodimer.

The protein resides in the cytoplasm. The catalysed reaction is tRNA(Asp) + L-aspartate + ATP = L-aspartyl-tRNA(Asp) + AMP + diphosphate. Catalyzes the attachment of L-aspartate to tRNA(Asp) in a two-step reaction: L-aspartate is first activated by ATP to form Asp-AMP and then transferred to the acceptor end of tRNA(Asp). This chain is Aspartate--tRNA ligase, found in Halalkalibacterium halodurans (strain ATCC BAA-125 / DSM 18197 / FERM 7344 / JCM 9153 / C-125) (Bacillus halodurans).